The sequence spans 486 residues: N-succinylglutamate 5-semialdehyde dehydrogenase (486 aa).

Residue 220–225 (GSSRTG) participates in NAD(+) binding. Catalysis depends on residues E243 and C277.

Belongs to the aldehyde dehydrogenase family. AstD subfamily.

It catalyses the reaction N-succinyl-L-glutamate 5-semialdehyde + NAD(+) + H2O = N-succinyl-L-glutamate + NADH + 2 H(+). It participates in amino-acid degradation; L-arginine degradation via AST pathway; L-glutamate and succinate from L-arginine: step 4/5. In terms of biological role, catalyzes the NAD-dependent reduction of succinylglutamate semialdehyde into succinylglutamate. The sequence is that of N-succinylglutamate 5-semialdehyde dehydrogenase from Shewanella frigidimarina (strain NCIMB 400).